We begin with the raw amino-acid sequence, 324 residues long: CYFIP-related Rac1 interactor B (324 aa).

A lipid anchor (N-myristoyl glycine) is attached at Gly-2. Lys-74 participates in a covalent cross-link: Glycyl lysine isopeptide (Lys-Gly) (interchain with G-Cter in ubiquitin).

The protein belongs to the CYRI family. Interacts with RAC1 (GTP-bound form preferentially). Ubiquitinated at Lys-74 upon Salmonella bacterial infection.

The protein localises to the membrane. It is found in the mitochondrion. In terms of biological role, negatively regulates RAC1 signaling and RAC1-driven cytoskeletal remodeling. Regulates chemotaxis, cell migration and epithelial polarization by controlling the polarity, plasticity, duration and extent of protrusions. Limits Rac1 mediated activation of the Scar/WAVE complex, focuses protrusion signals and regulates pseudopod complexity by inhibiting Scar/WAVE-induced actin polymerization. Protects against Salmonella bacterial infection. Attenuates processes such as macropinocytosis, phagocytosis and cell migration and restrict sopE-mediated bacterial entry. Also restricts infection mediated by Mycobacterium tuberculosis and Listeria monocytogenes. Involved in the regulation of mitochondrial dynamics and oxidative stress. The chain is CYFIP-related Rac1 interactor B from Homo sapiens (Human).